Consider the following 428-residue polypeptide: CRS2-associated factor 1, mitochondrial (428 aa).

The N-terminal 21 residues, 1-21 (MLLLAGLLRRARPPRRPSVRR), are a transit peptide targeting the mitochondrion. 2 disordered regions span residues 33 to 100 (PPAS…REPK) and 129 to 152 (HADDPAPAAERELEEARRRERERV). 2 CRM domains span residues 155–253 (EPLT…KRPV) and 275–371 (EGLT…IQDN). A disordered region spans residues 378–428 (SVLEEESAGAESENGDQEQASSDWASDECSQLSSSDEMPDDKSAISEADSD). Over residues 380 to 393 (LEEESAGAESENGD) the composition is skewed to acidic residues. Positions 394-413 (QEQASSDWASDECSQLSSSD) are enriched in polar residues.

In terms of assembly, part of large ribonucleo-protein complexes that include group IIB introns.

It is found in the mitochondrion. May be involved in the splicing of group IIB introns in mitochondria. This Oryza sativa subsp. japonica (Rice) protein is CRS2-associated factor 1, mitochondrial.